The primary structure comprises 553 residues: Putative transport protein YidE (553 aa).

The next 5 helical transmembrane spans lie at Ile-4–Val-24, Gly-28–Ser-48, Phe-65–Ser-85, Leu-95–Phe-115, and Met-158–Leu-178. RCK C-terminal domains are found at residues Gln-191–Gln-276 and Asp-279–Asn-361. 6 consecutive transmembrane segments (helical) span residues Met-371–Val-391, Gly-393–Leu-413, Asn-431–Leu-448, Leu-464–Leu-484, Tyr-493–Ala-513, and Leu-533–Gly-553.

It belongs to the AAE transporter (TC 2.A.81) family. YidE subfamily.

It localises to the cell membrane. This Shigella sonnei (strain Ss046) protein is Putative transport protein YidE.